The chain runs to 464 residues: ATP synthase subunit beta (464 aa).

Residue 154–161 (GGAGVGKT) participates in ATP binding.

The protein belongs to the ATPase alpha/beta chains family. F-type ATPases have 2 components, CF(1) - the catalytic core - and CF(0) - the membrane proton channel. CF(1) has five subunits: alpha(3), beta(3), gamma(1), delta(1), epsilon(1). CF(0) has three main subunits: a(1), b(2) and c(9-12). The alpha and beta chains form an alternating ring which encloses part of the gamma chain. CF(1) is attached to CF(0) by a central stalk formed by the gamma and epsilon chains, while a peripheral stalk is formed by the delta and b chains.

The protein localises to the cell inner membrane. The enzyme catalyses ATP + H2O + 4 H(+)(in) = ADP + phosphate + 5 H(+)(out). Produces ATP from ADP in the presence of a proton gradient across the membrane. The catalytic sites are hosted primarily by the beta subunits. This chain is ATP synthase subunit beta, found in Blochmanniella floridana.